The primary structure comprises 404 residues: Probable tRNA sulfurtransferase (404 aa).

A THUMP domain is found at Glu-61 to Glu-166. ATP-binding positions include Leu-184–Leu-185, His-209–Phe-210, Arg-266, Gly-288, and Gln-297.

This sequence belongs to the ThiI family.

The protein localises to the cytoplasm. The enzyme catalyses [ThiI sulfur-carrier protein]-S-sulfanyl-L-cysteine + a uridine in tRNA + 2 reduced [2Fe-2S]-[ferredoxin] + ATP + H(+) = [ThiI sulfur-carrier protein]-L-cysteine + a 4-thiouridine in tRNA + 2 oxidized [2Fe-2S]-[ferredoxin] + AMP + diphosphate. It carries out the reaction [ThiS sulfur-carrier protein]-C-terminal Gly-Gly-AMP + S-sulfanyl-L-cysteinyl-[cysteine desulfurase] + AH2 = [ThiS sulfur-carrier protein]-C-terminal-Gly-aminoethanethioate + L-cysteinyl-[cysteine desulfurase] + A + AMP + 2 H(+). It functions in the pathway cofactor biosynthesis; thiamine diphosphate biosynthesis. Its function is as follows. Catalyzes the ATP-dependent transfer of a sulfur to tRNA to produce 4-thiouridine in position 8 of tRNAs, which functions as a near-UV photosensor. Also catalyzes the transfer of sulfur to the sulfur carrier protein ThiS, forming ThiS-thiocarboxylate. This is a step in the synthesis of thiazole, in the thiamine biosynthesis pathway. The sulfur is donated as persulfide by IscS. The chain is Probable tRNA sulfurtransferase from Bacillus cereus (strain ATCC 10987 / NRS 248).